The following is a 418-amino-acid chain: Gamma-glutamyl phosphate reductase (418 aa).

It belongs to the gamma-glutamyl phosphate reductase family.

Its subcellular location is the cytoplasm. It carries out the reaction L-glutamate 5-semialdehyde + phosphate + NADP(+) = L-glutamyl 5-phosphate + NADPH + H(+). It functions in the pathway amino-acid biosynthesis; L-proline biosynthesis; L-glutamate 5-semialdehyde from L-glutamate: step 2/2. Its function is as follows. Catalyzes the NADPH-dependent reduction of L-glutamate 5-phosphate into L-glutamate 5-semialdehyde and phosphate. The product spontaneously undergoes cyclization to form 1-pyrroline-5-carboxylate. The protein is Gamma-glutamyl phosphate reductase of Thermobifida fusca (strain YX).